Reading from the N-terminus, the 1093-residue chain is Isomaltosyltransferase (1093 aa).

The first 29 residues, 1-29 (MYVRNLTGSFRFSLSFLLCFCLFVPSIYA), serve as a signal peptide directing secretion. The active-site Nucleophile is the D566. Residue E569 is part of the active site. Catalysis depends on D631, which acts as the Proton donor. A CBM6 domain is found at 968-1091 (VEYEAEFGVQ…GINFDNIAIV (124 aa)).

It belongs to the glycosyl hydrolase 31 family.

Its subcellular location is the secreted. The enzyme catalyses 2 alpha-isomaltosyl-(1-&gt;4)-D-maltotriose = alpha-isomaltosyl-(1-&gt;3)-alpha-isomaltosyl-(1-&gt;4)-D-maltotriose + D-maltotriose. It carries out the reaction alpha-isomaltosyl-(1-&gt;3)-alpha-isomaltosyl-(1-&gt;4)-D-maltotriose = cyclobis-(1-&gt;3)-alpha-D-isomaltosyl + D-maltotriose. Its activity is regulated as follows. Strongly inhibited by Hg(2+) and moderately inhibited by Cu(2+) and Pb(2+). Other metal ions, Tris and EDTA have almost no effects. Its function is as follows. Glycosyltransferase involved, together with CtsZ, in the conversion of alpha-1,4-glucan into a cyclic tetrasaccharide (CTS) constructed from four alpha-glucopyranosyl residues. Catalyzes the alpha-(1-&gt;3) transfer of the isomaltosyl moiety of alpha-isomaltosyl-(1-&gt;4)-D-maltotriose to another alpha-isomaltosyl-(1-&gt;4)-D-maltotriose, resulting in alpha-isomaltosyl-(1-&gt;3)-alpha-isomaltosyl-alpha-(1-&gt;4)-maltotriose formation. In addition, the enzyme catalyzes the intramolecular cyclization of the product, generating the cyclic tetrasaccharide cyclobis-(1-&gt;6)-alpha-nigerosyl. The sequence is that of Isomaltosyltransferase from Sporosarcina globispora (Bacillus globisporus).